The primary structure comprises 714 residues: Fatty acid oxidation complex subunit alpha (714 aa).

Positions 1-190 (MEMASAFTLN…KLGLVDDVVP (190 aa)) are enoyl-CoA hydratase. The 3-hydroxyacyl-CoA dehydrogenase stretch occupies residues 306-714 (APLNSVGILG…FWKTTATDLQ (409 aa)).

In the N-terminal section; belongs to the enoyl-CoA hydratase/isomerase family. It in the central section; belongs to the 3-hydroxyacyl-CoA dehydrogenase family. As to quaternary structure, heterotetramer of two alpha chains (FadJ) and two beta chains (FadI).

Its subcellular location is the cytoplasm. It catalyses the reaction a (3S)-3-hydroxyacyl-CoA = a (2E)-enoyl-CoA + H2O. The enzyme catalyses a 4-saturated-(3S)-3-hydroxyacyl-CoA = a (3E)-enoyl-CoA + H2O. It carries out the reaction a (3S)-3-hydroxyacyl-CoA + NAD(+) = a 3-oxoacyl-CoA + NADH + H(+). The catalysed reaction is (3S)-3-hydroxybutanoyl-CoA = (3R)-3-hydroxybutanoyl-CoA. The protein operates within lipid metabolism; fatty acid beta-oxidation. In terms of biological role, catalyzes the formation of a hydroxyacyl-CoA by addition of water on enoyl-CoA. Also exhibits 3-hydroxyacyl-CoA epimerase and 3-hydroxyacyl-CoA dehydrogenase activities. The polypeptide is Fatty acid oxidation complex subunit alpha (Escherichia coli O6:K15:H31 (strain 536 / UPEC)).